An 82-amino-acid chain; its full sequence is ATP synthase subunit c (82 aa).

2 consecutive transmembrane segments (helical) span residues 3–23 and 57–77; these read PLVA…ASLG and LAFM…LLFA.

It belongs to the ATPase C chain family. F-type ATPases have 2 components, F(1) - the catalytic core - and F(0) - the membrane proton channel. F(1) has five subunits: alpha(3), beta(3), gamma(1), delta(1), epsilon(1). F(0) has four main subunits: a(1), b(1), b'(1) and c(10-14). The alpha and beta chains form an alternating ring which encloses part of the gamma chain. F(1) is attached to F(0) by a central stalk formed by the gamma and epsilon chains, while a peripheral stalk is formed by the delta, b and b' chains.

The protein resides in the cellular thylakoid membrane. F(1)F(0) ATP synthase produces ATP from ADP in the presence of a proton or sodium gradient. F-type ATPases consist of two structural domains, F(1) containing the extramembraneous catalytic core and F(0) containing the membrane proton channel, linked together by a central stalk and a peripheral stalk. During catalysis, ATP synthesis in the catalytic domain of F(1) is coupled via a rotary mechanism of the central stalk subunits to proton translocation. In terms of biological role, key component of the F(0) channel; it plays a direct role in translocation across the membrane. A homomeric c-ring of between 10-14 subunits forms the central stalk rotor element with the F(1) delta and epsilon subunits. This chain is ATP synthase subunit c, found in Synechococcus sp. (strain PCC 6716).